The following is a 536-amino-acid chain: Metal transporter Nramp2 (536 aa).

Residues 1–37 form a disordered region; it reads MSSPSGGEDSKDDEKDEESNRLLPLSSSSQSQSLQSE. Low complexity predominate over residues 22–36; sequence LLPLSSSSQSQSLQS. A glycan (N-linked (GlcNAc...) asparagine) is linked at asparagine 38. A run of 12 helical transmembrane segments spans residues 76-96, 104-124, 161-181, 185-205, 213-233, 259-279, 305-325, 347-367, 400-420, 435-455, 465-485, and 492-512; these read LWLF…PGNL, AIAG…GLLI, VALI…IQIL, FLPL…FLFL, LEGV…WMCG, AVGV…SALV, VALF…AKGF, YGGG…AAGQ, SFAI…EASL, IPFA…MGVF, AWTI…DFFI, and LFGF…IYLV.

This sequence belongs to the NRAMP (TC 2.A.55) family.

The protein localises to the membrane. Functionally, probable divalent metal transporter. The polypeptide is Metal transporter Nramp2 (Populus trichocarpa (Western balsam poplar)).